A 429-amino-acid chain; its full sequence is Glutamate dehydrogenase B (429 aa).

The interval Met1–Ala20 is disordered. The active site involves Lys119.

Belongs to the Glu/Leu/Phe/Val dehydrogenases family. As to quaternary structure, homohexamer.

This Halobacterium salinarum (strain ATCC 700922 / JCM 11081 / NRC-1) (Halobacterium halobium) protein is Glutamate dehydrogenase B (gdhB).